The following is a 101-amino-acid chain: Venom peptide Pc (101 aa).

The first 20 residues, 1-20, serve as a signal peptide directing secretion; it reads MSHLRIAVIFLCTLFALTAG.

The protein belongs to the scorpion La1-like peptide family. In terms of processing, contains 4 disulfide bonds. As to expression, expressed by the venom gland.

It is found in the secreted. In Pandinus cavimanus (Tanzanian red clawed scorpion), this protein is Venom peptide Pc.